The chain runs to 214 residues: Oxaloacetate tautomerase fahd-1, mitochondrial (214 aa).

Residues E65, E67, and D96 each contribute to the Mg(2+) site.

Belongs to the FAH family. It depends on Mg(2+) as a cofactor. Mn(2+) is required as a cofactor. In terms of tissue distribution, widely expressed.

Its subcellular location is the mitochondrion. The catalysed reaction is oxaloacetate = enol-oxaloacetate. Functionally, tautomerase that converts enol-oxaloacetate, a strong inhibitor of succinate dehydrogenase, to the physiological keto form of oxaloacetate. In Caenorhabditis elegans, this protein is Oxaloacetate tautomerase fahd-1, mitochondrial.